Here is a 303-residue protein sequence, read N- to C-terminus: Lipoyl synthase (303 aa).

7 residues coordinate [4Fe-4S] cluster: cysteine 35, cysteine 40, cysteine 46, cysteine 61, cysteine 65, cysteine 68, and serine 273. The region spanning 47–262 (FRERQATFLI…KELAEKMGFR (216 aa)) is the Radical SAM core domain.

The protein belongs to the radical SAM superfamily. Lipoyl synthase family. Requires [4Fe-4S] cluster as cofactor.

The protein resides in the cytoplasm. It catalyses the reaction [[Fe-S] cluster scaffold protein carrying a second [4Fe-4S](2+) cluster] + N(6)-octanoyl-L-lysyl-[protein] + 2 oxidized [2Fe-2S]-[ferredoxin] + 2 S-adenosyl-L-methionine + 4 H(+) = [[Fe-S] cluster scaffold protein] + N(6)-[(R)-dihydrolipoyl]-L-lysyl-[protein] + 4 Fe(3+) + 2 hydrogen sulfide + 2 5'-deoxyadenosine + 2 L-methionine + 2 reduced [2Fe-2S]-[ferredoxin]. Its pathway is protein modification; protein lipoylation via endogenous pathway; protein N(6)-(lipoyl)lysine from octanoyl-[acyl-carrier-protein]: step 2/2. In terms of biological role, catalyzes the radical-mediated insertion of two sulfur atoms into the C-6 and C-8 positions of the octanoyl moiety bound to the lipoyl domains of lipoate-dependent enzymes, thereby converting the octanoylated domains into lipoylated derivatives. The chain is Lipoyl synthase from Geobacter sulfurreducens (strain ATCC 51573 / DSM 12127 / PCA).